A 261-amino-acid chain; its full sequence is Undecaprenyl-diphosphatase (261 aa).

The next 7 helical transmembrane spans lie at 38 to 58, 75 to 95, 106 to 126, 136 to 156, 181 to 201, 217 to 237, and 241 to 261; these read RSDF…TFVF, RDYV…GLAV, IQPI…AESV, VTWS…VFPG, FSFL…CFEL, VAFV…LGYI, and SFAP…TWLT.

Belongs to the UppP family.

It is found in the cell inner membrane. The catalysed reaction is di-trans,octa-cis-undecaprenyl diphosphate + H2O = di-trans,octa-cis-undecaprenyl phosphate + phosphate + H(+). Its function is as follows. Catalyzes the dephosphorylation of undecaprenyl diphosphate (UPP). Confers resistance to bacitracin. In Xylella fastidiosa (strain 9a5c), this protein is Undecaprenyl-diphosphatase.